A 242-amino-acid chain; its full sequence is Adenosylcobinamide-GDP ribazoletransferase (242 aa).

Transmembrane regions (helical) follow at residues 31-51 (LLFY…LSTA), 52-72 (LMGA…VLLS), 109-129 (IAVV…VALI), 134-154 (GAAL…LFLT), and 188-208 (ILIG…CFIG).

The protein belongs to the CobS family. Mg(2+) is required as a cofactor.

Its subcellular location is the cell inner membrane. The catalysed reaction is alpha-ribazole + adenosylcob(III)inamide-GDP = adenosylcob(III)alamin + GMP + H(+). The enzyme catalyses alpha-ribazole 5'-phosphate + adenosylcob(III)inamide-GDP = adenosylcob(III)alamin 5'-phosphate + GMP + H(+). It functions in the pathway cofactor biosynthesis; adenosylcobalamin biosynthesis; adenosylcobalamin from cob(II)yrinate a,c-diamide: step 7/7. Joins adenosylcobinamide-GDP and alpha-ribazole to generate adenosylcobalamin (Ado-cobalamin). Also synthesizes adenosylcobalamin 5'-phosphate from adenosylcobinamide-GDP and alpha-ribazole 5'-phosphate. The chain is Adenosylcobinamide-GDP ribazoletransferase from Pseudomonas fluorescens (strain SBW25).